The chain runs to 807 residues: MSKPDSIFLRALRWIQKWMVQTIVVPHDPFDDLNIDPTKPLVYLMKTESISDIAALSEITEGFGLPSPYEPLQLDGLTVPRVVCLEGRKPLFGKRESGDKFLNYFTSLLSLHSESPELDIQLVPVCLYWGRTPGKEEDSMKAAVFERENPTWLRKWLMILFLGRHNFVQFSNALSLRHMADEHGTDKRIAHKLTRVARVHFRRQRKVMTGPQLPNRQALFASLLKSESIKKAIEEESANKKVTVEKARETAIEYLDEIAADYSDSLVRIAERFLTWLWNKLYSGINIKGAEQVRQLHHDGHEIVYVPCHRSHMDYLLLSYILYYQGMVPPHIAAGINLNFWPAGPMFRRGGAFFIRRSFNGNKLYTAVFREYLDQLFAKGYAVEYFTEGGRSRTGRLLAPKTGMLAMTINSVLRGIERPVTLVPVYLGYDHVMEVATYHKELSGKKKKKESVWQVFGAIRKLGNFGQGYVNFGEPINLQQFLNQQAPEWRDELAKDPDQKPSWFTPSVNLLANRVMTNINGAAAASSVTLTSLVLLASEQNALERSQLERQLDLYLALLKTVPYTEYASVAEGNGKSIVDHCLSLNKFVSTKDLIGEIISVDEKIAITMSYYRNNIIHLMALPSLIASCLVHYDVCDRQRIHAIVMDFYPLLKAELFMSIDDVPKHVDCILDFMVEQGLLTGSDQFEITPRHITQVLLLAETISETLQRYAIIFNLLAIKPDLERSELERDSHLLAQRLGALHGITAPEFYDKKLYNTLSVKLKELGYLCSDEHRAEVIRIRDNANKLLSSLVRQTIVDSVEAEHGQ.

Positions 308 to 313 match the HXXXXD motif motif; sequence CHRSHM.

This sequence belongs to the GPAT/DAPAT family.

Its subcellular location is the cell inner membrane. The enzyme catalyses sn-glycerol 3-phosphate + an acyl-CoA = a 1-acyl-sn-glycero-3-phosphate + CoA. Its pathway is phospholipid metabolism; CDP-diacylglycerol biosynthesis; CDP-diacylglycerol from sn-glycerol 3-phosphate: step 1/3. The chain is Glycerol-3-phosphate acyltransferase from Shewanella frigidimarina (strain NCIMB 400).